The sequence spans 90 residues: Accessory gland-specific peptide 26Ab (90 aa).

A signal peptide spans 1–21 (MNYFAVICIFSCICLWQFSDA).

In terms of tissue distribution, main cells and secondary cells of the accessory glands of 1 day old virgin males (at protein level). In 5 day old virgin males, only detected in the secondary cells (at protein level). Reappears in the main cells after mating (at protein level). First detected in adult males 3-4 hr after eclosion, levels increase reaching a peak at day 3-5 which is maintained until at least day 10 of adulthood (at protein level). In unmated male adults, levels are maintained for the first 6 days of adulthood and then gradually decrease for at least the next 8 days. No expression in females.

Its subcellular location is the secreted. It is found in the extracellular space. The protein resides in the cytoplasm. Functionally, this protein is transferred from male to female during mating and may affect egglaying and behavior after mating. The protein is Accessory gland-specific peptide 26Ab of Drosophila melanogaster (Fruit fly).